Here is a 487-residue protein sequence, read N- to C-terminus: Protein nucleotidyltransferase YdiU (487 aa).

G90, G92, R93, K113, D125, G126, R176, and R183 together coordinate ATP. D252 (proton acceptor) is an active-site residue. Mg(2+) contacts are provided by N253 and D262. Residue D262 coordinates ATP.

This sequence belongs to the SELO family. The cofactor is Mg(2+). Mn(2+) is required as a cofactor.

It catalyses the reaction L-seryl-[protein] + ATP = 3-O-(5'-adenylyl)-L-seryl-[protein] + diphosphate. It carries out the reaction L-threonyl-[protein] + ATP = 3-O-(5'-adenylyl)-L-threonyl-[protein] + diphosphate. The catalysed reaction is L-tyrosyl-[protein] + ATP = O-(5'-adenylyl)-L-tyrosyl-[protein] + diphosphate. The enzyme catalyses L-histidyl-[protein] + UTP = N(tele)-(5'-uridylyl)-L-histidyl-[protein] + diphosphate. It catalyses the reaction L-seryl-[protein] + UTP = O-(5'-uridylyl)-L-seryl-[protein] + diphosphate. It carries out the reaction L-tyrosyl-[protein] + UTP = O-(5'-uridylyl)-L-tyrosyl-[protein] + diphosphate. Functionally, nucleotidyltransferase involved in the post-translational modification of proteins. It can catalyze the addition of adenosine monophosphate (AMP) or uridine monophosphate (UMP) to a protein, resulting in modifications known as AMPylation and UMPylation. The chain is Protein nucleotidyltransferase YdiU from Pseudomonas savastanoi pv. phaseolicola (strain 1448A / Race 6) (Pseudomonas syringae pv. phaseolicola (strain 1448A / Race 6)).